The chain runs to 143 residues: uncharacterized protein (143 aa).

The region spanning 24 to 78 (IRQRREWQNMSQTTLGEAIGVTFQQVQKYEKGVNRVGAGRLQQISKALKVEPSYF) is the HTH cro/C1-type domain. Positions 35–54 (QTTLGEAIGVTFQQVQKYEK) form a DNA-binding region, H-T-H motif.

This is an uncharacterized protein from Sinorhizobium fredii (strain NBRC 101917 / NGR234).